We begin with the raw amino-acid sequence, 500 residues long: Glycerol kinase (500 aa).

Position 13 (T13) interacts with ADP. Positions 13, 14, and 15 each coordinate ATP. Residue T13 participates in sn-glycerol 3-phosphate binding. ADP is bound at residue R17. The sn-glycerol 3-phosphate site is built by R83, E84, Y135, and D244. Glycerol-binding residues include R83, E84, Y135, D244, and Q245. ADP-binding residues include T266, G309, G410, and N414. 3 residues coordinate ATP: T266, G309, and G410.

It belongs to the FGGY kinase family.

It carries out the reaction glycerol + ATP = sn-glycerol 3-phosphate + ADP + H(+). It functions in the pathway polyol metabolism; glycerol degradation via glycerol kinase pathway; sn-glycerol 3-phosphate from glycerol: step 1/1. With respect to regulation, inhibited by fructose 1,6-bisphosphate (FBP). In terms of biological role, key enzyme in the regulation of glycerol uptake and metabolism. Catalyzes the phosphorylation of glycerol to yield sn-glycerol 3-phosphate. The protein is Glycerol kinase of Chromobacterium violaceum (strain ATCC 12472 / DSM 30191 / JCM 1249 / CCUG 213 / NBRC 12614 / NCIMB 9131 / NCTC 9757 / MK).